The primary structure comprises 319 residues: Thioredoxin reductase (319 aa).

FAD contacts are provided by residues Ser11–Ala14, Val40–Ala41, Gln45, Asn54, Val87, Cys145, Asp288, and Arg295–Ala297. Cysteines 142 and 145 form a disulfide.

The protein belongs to the class-II pyridine nucleotide-disulfide oxidoreductase family. In terms of assembly, homodimer. Requires FAD as cofactor.

The protein resides in the cytoplasm. The enzyme catalyses [thioredoxin]-dithiol + NADP(+) = [thioredoxin]-disulfide + NADPH + H(+). The protein is Thioredoxin reductase (TRR1) of Eremothecium gossypii (strain ATCC 10895 / CBS 109.51 / FGSC 9923 / NRRL Y-1056) (Yeast).